We begin with the raw amino-acid sequence, 229 residues long: Nectarin-1 (229 aa).

Positions 1–32 (MAAFGINSKIFQSMEMAILFLLAISIDRYCFA) are cleaved as a signal peptide. Cys42 and Cys57 are joined by a disulfide. N-linked (GlcNAc...) asparagine glycosylation occurs at Asn60. The 149-residue stretch at 69-217 (LAISKPGATN…TFQINTEDVQ (149 aa)) folds into the Cupin type-1 domain. Residues His117, His119, Glu124, and His163 each coordinate Mn(2+).

Monomer. In the absence of manganese, it forms tetrameric and pentameric forms which show superoxide dismutase activity. Mn(2+) serves as cofactor. In terms of tissue distribution, nectary tissues and to a lower level ovary. Not detected in petals, stems, leaves, roots or other floral tissues.

It is found in the secreted. It localises to the extracellular space. The protein localises to the apoplast. It carries out the reaction 2 superoxide + 2 H(+) = H2O2 + O2. May interact with bacterial adhesins thereby protecting the reproductive tissues from microbial attack. Has no oxalate oxidase activity. This chain is Nectarin-1 (NECI), found in Nicotiana langsdorffii x Nicotiana sanderae (Ornamental tobacco).